The sequence spans 431 residues: Probable prephenate dehydrogenase [NADP(+)] (431 aa).

5-34 (FQVGIIGFGDMGRLYAEYISKAGWRVNVCD) is a binding site for NADP(+). In terms of domain architecture, Prephenate/arogenate dehydrogenase spans 5-285 (FQVGIIGFGD…GENMDRNSSG (281 aa)).

The protein belongs to the prephenate/arogenate dehydrogenase family.

It localises to the cytoplasm. The enzyme catalyses prephenate + NADP(+) = 3-(4-hydroxyphenyl)pyruvate + CO2 + NADPH. The protein operates within amino-acid biosynthesis; L-tyrosine biosynthesis; (4-hydroxyphenyl)pyruvate from prephenate (NADP(+) route): step 1/1. This chain is Probable prephenate dehydrogenase [NADP(+)] (tyr1), found in Schizosaccharomyces pombe (strain 972 / ATCC 24843) (Fission yeast).